A 448-amino-acid polypeptide reads, in one-letter code: Damage-control phosphatase ARMT1 (448 aa).

Mn(2+)-binding residues include Asp257 and Asn258. A substrate-binding site is contributed by 257 to 258 (DN). 2 residues coordinate S-adenosyl-L-methionine: Glu262 and Asp295. Residue Asp295 coordinates Mn(2+). Substrate contacts are provided by residues 371–375 (DLNYR) and Lys408. The Subfamily III RTxK motif signature appears at 405–408 (RTLK).

Belongs to the damage-control phosphatase family. Sugar phosphate phosphatase III subfamily. The cofactor is Mn(2+). It depends on Ni(2+) as a cofactor. Post-translationally, automethylated.

The catalysed reaction is beta-D-fructose 1-phosphate + H2O = D-fructose + phosphate. It carries out the reaction beta-D-fructose 6-phosphate = dihydroxyacetone + D-glyceraldehyde 3-phosphate. The enzyme catalyses L-glutamyl-[protein] + S-adenosyl-L-methionine = [protein]-L-glutamate 5-O-methyl ester + S-adenosyl-L-homocysteine. In terms of biological role, metal-dependent phosphatase that shows phosphatase activity against several substrates, including fructose-1-phosphate and fructose-6-phosphate. Its preference for fructose-1-phosphate, a strong glycating agent that causes DNA damage rather than a canonical yeast metabolite, suggests a damage-control function in hexose phosphate metabolism. Has also been shown to have O-methyltransferase activity that methylates glutamate residues of target proteins to form gamma-glutamyl methyl ester residues. Possibly methylates PCNA, suggesting it is involved in the DNA damage response. This is Damage-control phosphatase ARMT1 from Danio rerio (Zebrafish).